The sequence spans 1292 residues: MYFNNELSNLKDHLLVTLQNNSDVERDRINFILWDLKFLDCFLHLKRLPFASECGMLEFSQKMIEIWKIQSHREPYDCPYWKEVIWKTKQEFRAEYSFPNTSLAANKVDDVSPKFVMEVIDVFVENLNVVVKINDPYSWLFVPEHKEQIEQVLKELKLLRFFVCFVSNKCIEPQYRHTTFYIHALIEASHIAMVVWLHLPVLNGIVNQYLAPSEVSRLRSDFMEMKIKSIQPDISRNNIYIDVLQALKSTIPQAQNKHAVESGIVETPTQNLTVGLSDQMVNLQEMLCFLRDNLIHLPILDLEFHLQDMDSVIVDAGLLIYSLYDIKGEKEDTVLDNMNRALGFDLPRNIEPIKAMVYLVMQKAFQSNLPRVHGLGYVDFLLKNLKDFQGRYSDSLAFLKNQLQVIQTKFESMQPFLKVVVEEPHNKLKTLNEDYATQIIRKAYEVEYVVDACINKEVPQWCIERWLLDIIEEITCIKAKIQEKNTVEDTMKSVIASSQLARTPRMNEEIVGFEDVIETLRKKLLNGTKGQDVISMHGMPGLGKTTLANRLYSDRSVVSQFDICAQCCVSQVYSYKDLLLALLRDAIGEGSVRTELHANELADMLRKTLLPRRYLILVDDVWENSVWDDLSGCFPDVNNRSRIILTTRHHEVAKYASVHSDPLHLRMFDEVESWKLLEKKVFGEESCSPLLRDIGQRIAKMCGQLPLSIVLVAGILSEMEKEVEYWEQVANNLGTHIHNDSRAVVDQSYHVLPCHLKSCFLYFGAFLEDRVIDISRLIRLWISESFVKSCEGRSLEDIAEGYLENLIGRNLVMVTQRDDSDGKVKACRLHDVLLDFCKERAAEENFLLWINRDQITKPSSCVYSHNQHAHLAFTDMKNLVEWSASCSRVGSVLFKNYDPYFAGRPLSSHAFSISRILLNFKFLKVLDLEHQVVIDSIPTELFYLRYISAHIEQNSIPSSISNLWNLETLILNRTSAATGKTLLLPSTVWDMVKLRHLHIPKFSPENKKALLKKSARLDDLETLFNPYFTRVEDAELMLRKTPNLRKLICEVQCLEYPHQYHVLNFPIRLEMLKLHQSNIFNPISFCISAPNLKYLELSGFYLDSQYLSETADHLKHLEVLKLYYVEFGDHREWKVSNGMFPQLKILKLKCVSLLKWIVADDAFPNLEQLVLRGCRHLMEIPSCFMDILSLQYIEVENCNESVVKSAMNIQETQVEDNQNTNFKLILIEIHLFYLFDMKGIESISTDMKEKKLTVTRDVDADEVQLVVEKLRNVAYADEVQLVVEKLRKRGML.

Coiled-coil stretches lie at residues 394–414 and 505–526; these read DSLA…ESMQ and RMNE…KLLN. Residues 505-792 form the NB-ARC domain; sequence RMNEEIVGFE…SESFVKSCEG (288 aa). ATP is bound at residue 538–545; sequence GMPGLGKT. LRR repeat units follow at residues 842-865, 920-944, 963-991, 1066-1089, 1094-1113, 1114-1142, and 1163-1187; these read AEEN…VYSH, FKFL…LFYL, LWNL…VWDM, PIRL…CISA, YLEL…TADH, LKHL…MFPQ, and FPNL…FMDI. The region spanning 1211 to 1278 is the HMA domain; that stretch reads ETQVEDNQNT…KLRNVAYADE (68 aa).

The protein belongs to the disease resistance NB-LRR family.

It is found in the cytoplasm. It localises to the membrane. Functionally, confers resistance to late blight (Phytophthora infestans) races carrying the avirulence gene Avr1. Resistance proteins guard the plant against pathogens that contain an appropriate avirulence protein via an indirect interaction with this avirulence protein. That triggers a defense system including the hypersensitive response, which restricts the pathogen growth. In Solanum demissum (Wild potato), this protein is Putative late blight resistance protein homolog R1C-3 (R1C-3).